Reading from the N-terminus, the 115-residue chain is Promotilin (115 aa).

Residues 1-25 (MVSRKAVAALLVVHAPAMLASQTEA) form the signal peptide. The segment at 40-74 (EKERSKGQKKSLSVWQRSGEEGPVDPAEPIEEEGN) is disordered.

Belongs to the motilin family.

Its subcellular location is the secreted. In terms of biological role, plays an important role in the regulation of interdigestive gastrointestinal motility and indirectly causes rhythmic contraction of duodenal and colonic smooth muscle. The sequence is that of Promotilin (MLN) from Macaca mulatta (Rhesus macaque).